We begin with the raw amino-acid sequence, 151 residues long: MLP-like protein 328 (151 aa).

This sequence belongs to the MLP family.

The chain is MLP-like protein 328 (MLP328) from Arabidopsis thaliana (Mouse-ear cress).